A 594-amino-acid polypeptide reads, in one-letter code: Type IV inositol polyphosphate 5-phosphatase 7 (594 aa).

The interval 246-300 (FRCGHRPSDYSRRPSDYSRPSDYYSRPSNYSRPSDVSRWGSSDDDNGPGDSPSTF) is disordered. The segment covering 251 to 261 (RPSDYSRRPSD) has biased composition (basic and acidic residues). Residues 262–279 (YSRPSDYYSRPSNYSRPS) show a composition bias toward low complexity. 2 catalytic regions span residues 435–450 (DRVI…IALS) and 515–530 (KRRT…WHGE).

It belongs to the inositol polyphosphate 5-phosphatase family. Broadly expressed in emerging organs. Mostly localized in procambium of growing organs. Restricted to vascular differentiating cells of young organs.

The protein resides in the nucleus. The protein localises to the cell membrane. It carries out the reaction a 1,2-diacyl-sn-glycero-3-phospho-(1D-myo-inositol-4,5-bisphosphate) + H2O = a 1,2-diacyl-sn-glycero-3-phospho-(1D-myo-inositol 4-phosphate) + phosphate. It catalyses the reaction a 1,2-diacyl-sn-glycero-3-phospho-(1D-myo-inositol-3,4,5-trisphosphate) + H2O = a 1,2-diacyl-sn-glycero-3-phospho-(1D-myo-inositol-3,4-bisphosphate) + phosphate. Has phosphatase activity toward PtdIns(4,5)P2 and at a lower extent toward PtdIns(3,4,5)P3 but not toward Ins(1,4,5)P3. Acts redundantly with CVP2 for maintaining vascular continuity. Regulates phosphoinositide-dependent VAN3 localization. Functions in salt stress response by regulating reactive oxygen species (ROS) production and stress-responsive genes expression. In Arabidopsis thaliana (Mouse-ear cress), this protein is Type IV inositol polyphosphate 5-phosphatase 7.